A 407-amino-acid chain; its full sequence is Arrestin homolog (407 aa).

It belongs to the arrestin family.

This chain is Arrestin homolog, found in Locusta migratoria (Migratory locust).